Here is a 77-residue protein sequence, read N- to C-terminus: Large ribosomal subunit protein eL14 (77 aa).

The protein belongs to the eukaryotic ribosomal protein eL14 family.

This is Large ribosomal subunit protein eL14 from Methanococcus maripaludis (strain C6 / ATCC BAA-1332).